The chain runs to 478 residues: UDP-N-acetylmuramate--L-alanine ligase (478 aa).

Residue 120–126 (GSHGKTT) coordinates ATP.

It belongs to the MurCDEF family.

The protein resides in the cytoplasm. It carries out the reaction UDP-N-acetyl-alpha-D-muramate + L-alanine + ATP = UDP-N-acetyl-alpha-D-muramoyl-L-alanine + ADP + phosphate + H(+). It participates in cell wall biogenesis; peptidoglycan biosynthesis. Functionally, cell wall formation. This is UDP-N-acetylmuramate--L-alanine ligase from Rickettsia bellii (strain OSU 85-389).